Consider the following 499-residue polypeptide: Alpha-amylase 3 (499 aa).

Ca(2+)-binding residues include N127 and D183. D213 (nucleophile) is an active-site residue. A Ca(2+)-binding site is contributed by H217. The Proton donor role is filled by E248.

The protein belongs to the glycosyl hydrolase 13 family. In terms of assembly, monomer. Requires Ca(2+) as cofactor.

Its subcellular location is the cytoplasm. The enzyme catalyses Endohydrolysis of (1-&gt;4)-alpha-D-glucosidic linkages in polysaccharides containing three or more (1-&gt;4)-alpha-linked D-glucose units.. In Dictyoglomus thermophilum (strain ATCC 35947 / DSM 3960 / H-6-12), this protein is Alpha-amylase 3 (amyC).